The chain runs to 198 residues: Elongation factor Ts (198 aa).

Positions 81 to 84 (TDFV) are involved in Mg(2+) ion dislocation from EF-Tu.

This sequence belongs to the EF-Ts family.

It is found in the cytoplasm. Its function is as follows. Associates with the EF-Tu.GDP complex and induces the exchange of GDP to GTP. It remains bound to the aminoacyl-tRNA.EF-Tu.GTP complex up to the GTP hydrolysis stage on the ribosome. The sequence is that of Elongation factor Ts from Herpetosiphon aurantiacus (strain ATCC 23779 / DSM 785 / 114-95).